The following is a 123-amino-acid chain: Large ribosomal subunit protein bL17 (123 aa).

It belongs to the bacterial ribosomal protein bL17 family. In terms of assembly, part of the 50S ribosomal subunit. Contacts protein L32.

The chain is Large ribosomal subunit protein bL17 from Borreliella burgdorferi (strain ATCC 35210 / DSM 4680 / CIP 102532 / B31) (Borrelia burgdorferi).